Reading from the N-terminus, the 392-residue chain is Formate-dependent phosphoribosylglycinamide formyltransferase (392 aa).

N(1)-(5-phospho-beta-D-ribosyl)glycinamide-binding positions include 22-23 (EL) and glutamate 82. ATP is bound by residues arginine 114, lysine 155, 160–165 (SSGKGQ), 195–198 (EGVV), and glutamate 203. Residues 119–308 (RLAAEELQLP…EFALHVRAFL (190 aa)) form the ATP-grasp domain. Positions 267 and 279 each coordinate Mg(2+). N(1)-(5-phospho-beta-D-ribosyl)glycinamide contacts are provided by residues aspartate 286, lysine 355, and 362 to 363 (RR).

The protein belongs to the PurK/PurT family. In terms of assembly, homodimer.

The enzyme catalyses N(1)-(5-phospho-beta-D-ribosyl)glycinamide + formate + ATP = N(2)-formyl-N(1)-(5-phospho-beta-D-ribosyl)glycinamide + ADP + phosphate + H(+). Its pathway is purine metabolism; IMP biosynthesis via de novo pathway; N(2)-formyl-N(1)-(5-phospho-D-ribosyl)glycinamide from N(1)-(5-phospho-D-ribosyl)glycinamide (formate route): step 1/1. Functionally, involved in the de novo purine biosynthesis. Catalyzes the transfer of formate to 5-phospho-ribosyl-glycinamide (GAR), producing 5-phospho-ribosyl-N-formylglycinamide (FGAR). Formate is provided by PurU via hydrolysis of 10-formyl-tetrahydrofolate. The chain is Formate-dependent phosphoribosylglycinamide formyltransferase from Shigella sonnei (strain Ss046).